Reading from the N-terminus, the 451-residue chain is Bifunctional protein GlmU (451 aa).

Positions 1–229 are pyrophosphorylase; it reads MQRHAIILAA…FDEIIGVNDR (229 aa). Residues 8–11, lysine 22, glutamine 72, and 77–78 each bind UDP-N-acetyl-alpha-D-glucosamine; these read LAAG and GT. Aspartate 102 contributes to the Mg(2+) binding site. The UDP-N-acetyl-alpha-D-glucosamine site is built by glycine 139, glutamate 154, and asparagine 227. Asparagine 227 provides a ligand contact to Mg(2+). Residues 230 to 250 are linker; it reads LMLSEAEKALQQRINRYHMEN. The interval 251–451 is N-acetyltransferase; it reads GVTIIDPSST…QVNKEGYLKK (201 aa). Arginine 332 and lysine 350 together coordinate UDP-N-acetyl-alpha-D-glucosamine. The active-site Proton acceptor is histidine 362. Residues tyrosine 365 and asparagine 376 each coordinate UDP-N-acetyl-alpha-D-glucosamine. Residues 385–386, alanine 422, and arginine 439 each bind acetyl-CoA; that span reads NY.

In the N-terminal section; belongs to the N-acetylglucosamine-1-phosphate uridyltransferase family. This sequence in the C-terminal section; belongs to the transferase hexapeptide repeat family. As to quaternary structure, homotrimer. Mg(2+) is required as a cofactor.

It is found in the cytoplasm. It catalyses the reaction alpha-D-glucosamine 1-phosphate + acetyl-CoA = N-acetyl-alpha-D-glucosamine 1-phosphate + CoA + H(+). The catalysed reaction is N-acetyl-alpha-D-glucosamine 1-phosphate + UTP + H(+) = UDP-N-acetyl-alpha-D-glucosamine + diphosphate. It functions in the pathway nucleotide-sugar biosynthesis; UDP-N-acetyl-alpha-D-glucosamine biosynthesis; N-acetyl-alpha-D-glucosamine 1-phosphate from alpha-D-glucosamine 6-phosphate (route II): step 2/2. It participates in nucleotide-sugar biosynthesis; UDP-N-acetyl-alpha-D-glucosamine biosynthesis; UDP-N-acetyl-alpha-D-glucosamine from N-acetyl-alpha-D-glucosamine 1-phosphate: step 1/1. Its pathway is bacterial outer membrane biogenesis; LPS lipid A biosynthesis. In terms of biological role, catalyzes the last two sequential reactions in the de novo biosynthetic pathway for UDP-N-acetylglucosamine (UDP-GlcNAc). The C-terminal domain catalyzes the transfer of acetyl group from acetyl coenzyme A to glucosamine-1-phosphate (GlcN-1-P) to produce N-acetylglucosamine-1-phosphate (GlcNAc-1-P), which is converted into UDP-GlcNAc by the transfer of uridine 5-monophosphate (from uridine 5-triphosphate), a reaction catalyzed by the N-terminal domain. The sequence is that of Bifunctional protein GlmU from Staphylococcus epidermidis (strain ATCC 35984 / DSM 28319 / BCRC 17069 / CCUG 31568 / BM 3577 / RP62A).